A 726-amino-acid polypeptide reads, in one-letter code: Transferrin (726 aa).

Residues 1–16 form the signal peptide; it reads MLLCLTLLFSASAVLA. 2 consecutive Transferrin-like domains span residues 29 to 367 and 374 to 719; these read YKVC…ERDT and VRFC…VIRA. Intrachain disulfides connect cysteine 32-cysteine 63 and cysteine 41-cysteine 54. Fe(3+) is bound by residues aspartate 78 and tyrosine 111. Intrachain disulfides connect cysteine 135–cysteine 231, cysteine 184–cysteine 210, cysteine 207–cysteine 216, and cysteine 274–cysteine 287. Threonine 137, arginine 141, valine 143, and glycine 144 together coordinate hydrogencarbonate. Asparagine 162 carries N-linked (GlcNAc...) asparagine glycosylation. Fe(3+) is bound at residue tyrosine 225. N-linked (GlcNAc...) asparagine glycosylation is found at asparagine 337 and asparagine 358. Disulfide bonds link cysteine 377-cysteine 414 and cysteine 387-cysteine 405. Fe(3+) contacts are provided by aspartate 429 and tyrosine 457. Cysteine 481 and cysteine 562 are joined by a disulfide. 4 residues coordinate hydrogencarbonate: threonine 483, arginine 487, alanine 489, and glycine 490. Fe(3+) is bound by residues tyrosine 573 and histidine 642.

Belongs to the transferrin family.

It localises to the secreted. Functionally, transferrins are iron binding transport proteins which bind Fe(3+) ion in association with the binding of an anion, usually bicarbonate. The chain is Transferrin from Blaberus discoidalis (Tropical cockroach).